The primary structure comprises 299 residues: Sulfate adenylyltransferase subunit 2 (299 aa).

The segment at 276–299 (EREGRVIDHDSAGSMEKKKREGYF) is disordered.

It belongs to the PAPS reductase family. CysD subfamily. As to quaternary structure, heterodimer composed of CysD, the smaller subunit, and CysN.

It catalyses the reaction sulfate + ATP + H(+) = adenosine 5'-phosphosulfate + diphosphate. It participates in sulfur metabolism; hydrogen sulfide biosynthesis; sulfite from sulfate: step 1/3. Functionally, with CysN forms the ATP sulfurylase (ATPS) that catalyzes the adenylation of sulfate producing adenosine 5'-phosphosulfate (APS) and diphosphate, the first enzymatic step in sulfur assimilation pathway. APS synthesis involves the formation of a high-energy phosphoric-sulfuric acid anhydride bond driven by GTP hydrolysis by CysN coupled to ATP hydrolysis by CysD. The sequence is that of Sulfate adenylyltransferase subunit 2 from Pseudoalteromonas translucida (strain TAC 125).